A 466-amino-acid polypeptide reads, in one-letter code: Voltage-gated potassium channel regulatory subunit KCNG2 (466 aa).

Residues 1 to 174 (MEPWPCSPGG…DVVDNPHSGL (174 aa)) lie on the Cytoplasmic side of the membrane. A disordered region spans residues 131–155 (AEARAGPTERGAQGSPARALGPRGR). Residues 175-196 (AGKLFACVSVSFVAVTAVGLCL) form a helical membrane-spanning segment. Over 197–217 (STMPDIRAEEERGECSPKCRS) the chain is Extracellular. The chain crosses the membrane as a helical span at residues 218 to 239 (LFVLETVCVAWFSFEFLLRSLQ). Over 240–250 (AESKCAFLRAP) the chain is Cytoplasmic. The helical transmembrane segment at 251–271 (LNIIDILALLPFYVSLLLGLA) threads the bilayer. Residues 272 to 283 (AGPGGTKLLERA) lie on the Extracellular side of the membrane. The helical; Voltage-sensor transmembrane segment at 284 to 304 (GLVLRLLRALRVLYVMRLARH) threads the bilayer. At 305-319 (SLGLRSLGLTMRRCA) the chain is on the cytoplasmic side. A helical transmembrane segment spans residues 320–341 (REFGLLLLFLCVAMALFAPLVH). The Extracellular portion of the chain corresponds to 342–356 (LAERELGARRDFSSV). The helical intramembrane region spans 357–368 (PASYWWAVISMT). Residues 369–374 (TVGYGD) carry the Selectivity filter motif. The stretch at 369–376 (TVGYGDMV) is an intramembrane region. Residues 377-383 (PRSLPGQ) are Extracellular-facing. A helical membrane pass occupies residues 384 to 412 (VVALSSILSGILLMAFPVTSIFHTFSRSY). Residues 413–466 (SELKEQQQRAASPEPALQEDSTHSATATEDSSQGPDSAGLADDSADALWVRAGR) are Cytoplasmic-facing. The interval 416 to 466 (KEQQQRAASPEPALQEDSTHSATATEDSSQGPDSAGLADDSADALWVRAGR) is disordered. Residues 435–447 (HSATATEDSSQGP) show a composition bias toward polar residues. The span at 448 to 460 (DSAGLADDSADAL) shows a compositional bias: low complexity.

Belongs to the potassium channel family. G (TC 1.A.1.2) subfamily. Kv6.2/KCNG2 sub-subfamily. In terms of assembly, heterodimer with KCNB1. As to expression, highly expressed in heart, liver, skeletal muscle, kidney and pancreas. Detected at low levels in brain, lung and placenta.

Its subcellular location is the cell membrane. Functionally, regulatory alpha-subunit of the voltage-gated potassium (Kv) channel which, when coassembled with KCNB1, can modulate the kinetics and conductance-voltage relationship. Modulates channel activity by shifting the threshold and the half-maximal activation to more negative values. Potassium channel subunit that does not form functional channels by itself. The protein is Voltage-gated potassium channel regulatory subunit KCNG2 of Homo sapiens (Human).